The following is a 534-amino-acid chain: CTP synthase (534 aa).

The segment at 1-269 (MHVSNSKFIF…DKIIIDAFRL (269 aa)) is amidoligase domain. Ser-17 is a CTP binding site. A UTP-binding site is contributed by Ser-17. 18-23 (SLGKGV) contacts ATP. Residue Tyr-58 coordinates L-glutamine. Position 75 (Asp-75) interacts with ATP. Mg(2+) contacts are provided by Asp-75 and Glu-143. CTP contacts are provided by residues 150 to 152 (DIE), 190 to 195 (KTKPTQ), and Lys-226. Residues 190-195 (KTKPTQ) and Lys-226 each bind UTP. Residues 294–532 (DIAIVGKYIK…IENAYIYKKE (239 aa)) form the Glutamine amidotransferase type-1 domain. Gly-352 is a binding site for L-glutamine. Cys-379 acts as the Nucleophile; for glutamine hydrolysis in catalysis. Residues 380-383 (LGMQ), Glu-403, and Arg-460 contribute to the L-glutamine site. Active-site residues include His-505 and Glu-507.

Belongs to the CTP synthase family. As to quaternary structure, homotetramer.

The enzyme catalyses UTP + L-glutamine + ATP + H2O = CTP + L-glutamate + ADP + phosphate + 2 H(+). It carries out the reaction L-glutamine + H2O = L-glutamate + NH4(+). It catalyses the reaction UTP + NH4(+) + ATP = CTP + ADP + phosphate + 2 H(+). Its pathway is pyrimidine metabolism; CTP biosynthesis via de novo pathway; CTP from UDP: step 2/2. Allosterically activated by GTP, when glutamine is the substrate; GTP has no effect on the reaction when ammonia is the substrate. The allosteric effector GTP functions by stabilizing the protein conformation that binds the tetrahedral intermediate(s) formed during glutamine hydrolysis. Inhibited by the product CTP, via allosteric rather than competitive inhibition. Its function is as follows. Catalyzes the ATP-dependent amination of UTP to CTP with either L-glutamine or ammonia as the source of nitrogen. Regulates intracellular CTP levels through interactions with the four ribonucleotide triphosphates. The polypeptide is CTP synthase (Hydrogenobaculum sp. (strain Y04AAS1)).